Reading from the N-terminus, the 433-residue chain is ATP-dependent protease ATPase subunit HslU (433 aa).

Residues valine 18, 60 to 65 (GVGKTE), aspartate 246, glutamate 311, and arginine 383 contribute to the ATP site.

Belongs to the ClpX chaperone family. HslU subfamily. As to quaternary structure, a double ring-shaped homohexamer of HslV is capped on each side by a ring-shaped HslU homohexamer. The assembly of the HslU/HslV complex is dependent on binding of ATP.

The protein resides in the cytoplasm. Its function is as follows. ATPase subunit of a proteasome-like degradation complex; this subunit has chaperone activity. The binding of ATP and its subsequent hydrolysis by HslU are essential for unfolding of protein substrates subsequently hydrolyzed by HslV. HslU recognizes the N-terminal part of its protein substrates and unfolds these before they are guided to HslV for hydrolysis. This Nitrobacter hamburgensis (strain DSM 10229 / NCIMB 13809 / X14) protein is ATP-dependent protease ATPase subunit HslU.